The chain runs to 447 residues: Transducin beta-like protein 2 (447 aa).

The tract at residues 38 to 72 (RSGRPACQKANGFPPDKSSGSKKQKQYQRIRKEKP) is disordered. Residues 57-69 (GSKKQKQYQRIRK) are compositionally biased toward basic residues. 7 WD repeats span residues 88 to 127 (SHSGNISCMDFSSNGKYLATCADDRTIRIWSTKDFLQREH), 134 to 174 (VELD…DGGY), 186 to 226 (KHKA…STIN), 228 to 267 (NQMNNTHAAVSPCGRFVASCGFTPDVKVWEVCFGKKGEFQ), 277 to 316 (GHSAAVHSFAFSNDSRRMASVSKDGTWKLWDTDVEYKKKQ), 329 to 367 (AAGAAPCRLALSPNAQVLALASGSSIHLYNTRRGEKEEC), and 371 to 409 (VHGECIANLSFDITGRFLASCGDRAVRLFHNTPGHRAMV). Lys-168 participates in a covalent cross-link: Glycyl lysine isopeptide (Lys-Gly) (interchain with G-Cter in SUMO2). Thr-433 is subject to Phosphothreonine; by ATM or ATR.

The protein is Transducin beta-like protein 2 (TBL2) of Homo sapiens (Human).